The chain runs to 216 residues: Peptide deformylase (216 aa).

Residues cysteine 134 and histidine 178 each coordinate Fe cation. Residue glutamate 179 is part of the active site. A Fe cation-binding site is contributed by histidine 182.

The protein belongs to the polypeptide deformylase family. It depends on Fe(2+) as a cofactor.

The catalysed reaction is N-terminal N-formyl-L-methionyl-[peptide] + H2O = N-terminal L-methionyl-[peptide] + formate. Functionally, removes the formyl group from the N-terminal Met of newly synthesized proteins. Requires at least a dipeptide for an efficient rate of reaction. N-terminal L-methionine is a prerequisite for activity but the enzyme has broad specificity at other positions. The sequence is that of Peptide deformylase from Mycoplasma pneumoniae (strain ATCC 29342 / M129 / Subtype 1) (Mycoplasmoides pneumoniae).